Reading from the N-terminus, the 883-residue chain is Valine--tRNA ligase (883 aa).

Positions 50–60 (PNVTGKLHMGH) match the 'HIGH' region motif. The 'KMSKS' region signature appears at 527 to 531 (KMSKS). Position 530 (Lys530) interacts with ATP. Residues 811-883 (LNELIDLDEE…KQRLEQLQRA (73 aa)) are a coiled coil. The interval 859-883 (QRTKRSDFEDQLTSTKQRLEQLQRA) is disordered.

Belongs to the class-I aminoacyl-tRNA synthetase family. ValS type 1 subfamily. As to quaternary structure, monomer.

The protein resides in the cytoplasm. The enzyme catalyses tRNA(Val) + L-valine + ATP = L-valyl-tRNA(Val) + AMP + diphosphate. In terms of biological role, catalyzes the attachment of valine to tRNA(Val). As ValRS can inadvertently accommodate and process structurally similar amino acids such as threonine, to avoid such errors, it has a 'posttransfer' editing activity that hydrolyzes mischarged Thr-tRNA(Val) in a tRNA-dependent manner. The protein is Valine--tRNA ligase of Lacticaseibacillus casei (Lactobacillus casei).